A 120-amino-acid chain; its full sequence is MESKEELAANNLNGENAQQENEGGEQAPTQNEEESRHLGGGEGQKPGGNIRRGRVRRLVPNFRWAIPNRHIEHNEARDDVERFVGQMMEIKRKTREQQMRHYMRFQTPEPDNHYDFCLIP.

Residues Met1–Arg54 are disordered. Residues Ala8–Ala27 are compositionally biased toward low complexity. Residues Asn31–Ile90 form an interaction with SIRT2 region. An interaction with alpha-tubulin region spans residues Asn31–Pro120. Position 117 (Cys117) interacts with Zn(2+).

The protein belongs to the BEX family. Interacts with alpha-tubulin. Interacts with SIRT2. In terms of processing, ubiquitinated and degraded by the proteasome. Very high expression in heart, skeletal muscle, liver, and kidney. The levels of expression are uniform throughout the brain.

It localises to the cytoplasm. It is found in the cytoskeleton. Its subcellular location is the spindle pole. The protein localises to the nucleus. In terms of biological role, may play a role in microtubule deacetylation by negatively regulating the SIRT2 deacetylase activity toward alpha-tubulin and thereby participate in the control of cell cycle progression and genomic stability. In absence of reductive stress, acts as a pseudosubstrate for the CRL2(FEM1B) complex: associates with FEM1B via zinc, thereby preventing association between FEM1B and its substrates. The protein is Protein BEX4 of Homo sapiens (Human).